The chain runs to 384 residues: Troponin T (384 aa).

A compositionally biased stretch (acidic residues) spans 1–15 (MSDEEEYSEEEEEVP). Disordered stretches follow at residues 1–23 (MSDE…PRHS), 61–169 (RAKE…KEQL), 237–257 (LRHK…KYPP), and 313–384 (PKWF…EEEE). Composition is skewed to basic and acidic residues over residues 61-74 (RAKE…LKDK) and 81-126 (MRAD…EKKR). Residues 316-327 (FGERPGKKKGDP) are compositionally biased toward basic and acidic residues. Over residues 328–384 (ESPEEEEVKADAGVDDELEEPTFEPEPEPEPEEEAAEEEAEEEEEEEEEEEEEEEEE) the composition is skewed to acidic residues.

Belongs to the troponin T family.

Functionally, troponin T is the tropomyosin-binding subunit of troponin, the thin filament regulatory complex which confers calcium-sensitivity to striated muscle actomyosin ATPase activity. This Periplaneta americana (American cockroach) protein is Troponin T (TNT).